The chain runs to 351 residues: Peptide chain release factor 1 (351 aa).

Gln-233 is subject to N5-methylglutamine.

Belongs to the prokaryotic/mitochondrial release factor family. Post-translationally, methylated by PrmC. Methylation increases the termination efficiency of RF1.

The protein resides in the cytoplasm. Its function is as follows. Peptide chain release factor 1 directs the termination of translation in response to the peptide chain termination codons UAG and UAA. The sequence is that of Peptide chain release factor 1 (prfA) from Treponema pallidum (strain Nichols).